The chain runs to 263 residues: Small ribosomal subunit protein eS4, Y isoform 2 (263 aa).

Residues 42 to 104 (LPLIVFLRNR…TGEHFRLVYN (63 aa)) form the S4 RNA-binding domain.

It belongs to the eukaryotic ribosomal protein eS4 family.

In Homo sapiens (Human), this protein is Small ribosomal subunit protein eS4, Y isoform 2 (RPS4Y2).